The chain runs to 323 residues: Apolipoprotein E (323 aa).

A signal peptide spans 1 to 18 (MKVLWAALVVTLLAGCWA). Repeat copies occupy residues 86 to 107 (ALMD…EQLG), 108 to 129 (PMTS…ARLR), 130 to 151 (SDME…AMLG), 152 to 173 (QSSE…KRVL), 174 to 195 (RDAE…EGAE), 196 to 217 (RSVS…ERNA), 218 to 239 (KVGA…QQLR), and 240 to 261 (GQLE…EQIQ). The segment at 86–261 (ALMDETMKEV…HLEEMREQIQ (176 aa)) is 8 X 22 AA approximate tandem repeats. A Methionine sulfoxide modification is found at M149. S153 carries the phosphoserine modification. The segment at 164–174 (HMRKLRKRVLR) is LDL and other lipoprotein receptors binding. Residue 168–171 (LRKR) coordinates heparin. Residues 216 to 296 (NAKVGALATQ…SWFEPLLEDM (81 aa)) form a lipid-binding and lipoprotein association region. A heparin-binding site is contributed by 235–242 (GQQLRGQL). The interval 272-323 (DQIRQKAEAFQARLKSWFEPLLEDMQRQWDGLVEKVQAAVATIPTSKPVEEP) is homooligomerization. The tract at residues 284–296 (RLKSWFEPLLEDM) is specificity for association with VLDL.

The protein belongs to the apolipoprotein A1/A4/E family. Homotetramer. May interact with ABCA1; functionally associated with ABCA1 in the biogenesis of HDLs. May interact with APP/A4 amyloid-beta peptide; the interaction is extremely stable in vitro but its physiological significance is unclear. May interact with MAPT. May interact with MAP2. In the cerebrospinal fluid, interacts with secreted SORL1. Interacts with PMEL; this allows the loading of PMEL luminal fragment on ILVs to induce fibril nucleation. In terms of processing, APOE exists as multiple glycosylated and sialylated glycoforms within cells and in plasma. The extent of glycosylation and sialylation are tissue and context specific. Post-translationally, glycated in plasma VLDL. Phosphorylated by FAM20C in the extracellular medium.

Its subcellular location is the secreted. The protein resides in the extracellular space. It localises to the extracellular matrix. The protein localises to the extracellular vesicle. It is found in the endosome. Its subcellular location is the multivesicular body. APOE is an apolipoprotein, a protein associating with lipid particles, that mainly functions in lipoprotein-mediated lipid transport between organs via the plasma and interstitial fluids. APOE is a core component of plasma lipoproteins and is involved in their production, conversion and clearance. Apolipoproteins are amphipathic molecules that interact both with lipids of the lipoprotein particle core and the aqueous environment of the plasma. As such, APOE associates with chylomicrons, chylomicron remnants, very low density lipoproteins (VLDL) and intermediate density lipoproteins (IDL) but shows a preferential binding to high-density lipoproteins (HDL). It also binds a wide range of cellular receptors including the LDL receptor/LDLR and the very low-density lipoprotein receptor/VLDLR that mediate the cellular uptake of the APOE-containing lipoprotein particles. Finally, APOE also has a heparin-binding activity and binds heparan-sulfate proteoglycans on the surface of cells, a property that supports the capture and the receptor-mediated uptake of APOE-containing lipoproteins by cells. The chain is Apolipoprotein E (APOE) from Canis lupus familiaris (Dog).